We begin with the raw amino-acid sequence, 209 residues long: Ribonuclease HII (209 aa).

The 192-residue stretch at 18 to 209 (SLVAGVDEVG…FKPVKALLER (192 aa)) folds into the RNase H type-2 domain. Residues Asp24, Glu25, and Asp116 each contribute to the a divalent metal cation site.

Belongs to the RNase HII family. Mn(2+) is required as a cofactor. It depends on Mg(2+) as a cofactor.

The protein localises to the cytoplasm. It carries out the reaction Endonucleolytic cleavage to 5'-phosphomonoester.. Endonuclease that specifically degrades the RNA of RNA-DNA hybrids. In Shewanella oneidensis (strain ATCC 700550 / JCM 31522 / CIP 106686 / LMG 19005 / NCIMB 14063 / MR-1), this protein is Ribonuclease HII.